The sequence spans 402 residues: Propionate kinase (402 aa).

Residues N11 and K18 each coordinate ATP. Mg(2+) is bound at residue N11. R86 is a substrate binding site. D143 serves as the catalytic Proton donor/acceptor. ATP is bound by residues H175, 203 to 207 (HLGNG), 278 to 280 (DLR), and 326 to 330 (GIGEN).

The protein belongs to the acetokinase family. TdcD subfamily. As to quaternary structure, homodimer. Requires Mg(2+) as cofactor.

It carries out the reaction propanoate + ATP = propanoyl phosphate + ADP. Its pathway is amino-acid degradation; L-threonine degradation via propanoate pathway; propanoate from L-threonine: step 4/4. Catalyzes the conversion of propionyl phosphate and ADP to propionate and ATP. This Citrobacter koseri (strain ATCC BAA-895 / CDC 4225-83 / SGSC4696) protein is Propionate kinase.